Here is a 375-residue protein sequence, read N- to C-terminus: Chaperone protein DnaJ 1 (375 aa).

The J domain maps to 4-68 (DYYAILGVER…EKRRIVDMGG (65 aa)). Residues 127 to 209 (GTKKPITIDT…CGGDGRVRTQ (83 aa)) form a CR-type zinc finger. Zn(2+)-binding residues include C140, C143, C157, C160, C183, C186, C197, and C200. CXXCXGXG motif repeat units follow at residues 140–147 (CDRCEGTG), 157–164 (CSTCNGSG), 183–190 (CPTCRGTG), and 197–204 (CDKCGGDG).

This sequence belongs to the DnaJ family. Homodimer. Zn(2+) serves as cofactor.

It is found in the cytoplasm. Participates actively in the response to hyperosmotic and heat shock by preventing the aggregation of stress-denatured proteins and by disaggregating proteins, also in an autonomous, DnaK-independent fashion. Unfolded proteins bind initially to DnaJ; upon interaction with the DnaJ-bound protein, DnaK hydrolyzes its bound ATP, resulting in the formation of a stable complex. GrpE releases ADP from DnaK; ATP binding to DnaK triggers the release of the substrate protein, thus completing the reaction cycle. Several rounds of ATP-dependent interactions between DnaJ, DnaK and GrpE are required for fully efficient folding. Also involved, together with DnaK and GrpE, in the DNA replication of plasmids through activation of initiation proteins. The polypeptide is Chaperone protein DnaJ 1 (Corynebacterium diphtheriae (strain ATCC 700971 / NCTC 13129 / Biotype gravis)).